Here is a 490-residue protein sequence, read N- to C-terminus: Betaine aldehyde dehydrogenase (490 aa).

Position 93 (D93) interacts with K(+). Residue 150-152 (GAW) coordinates NAD(+). The Charge relay system role is filled by K162. 176–179 (KPSE) serves as a coordination point for NAD(+). V180 serves as a coordination point for K(+). 230–233 (GIAS) is an NAD(+) binding site. L246 lines the K(+) pocket. The Proton acceptor role is filled by E252. Residues G254, C286, and E387 each contribute to the NAD(+) site. C286 acts as the Nucleophile in catalysis. At C286 the chain carries Cysteine sulfenic acid (-SOH). 2 residues coordinate K(+): K457 and G460. The active-site Charge relay system is the E464.

Belongs to the aldehyde dehydrogenase family. As to quaternary structure, dimer of dimers. The cofactor is K(+).

The enzyme catalyses betaine aldehyde + NAD(+) + H2O = glycine betaine + NADH + 2 H(+). The protein operates within amine and polyamine biosynthesis; betaine biosynthesis via choline pathway; betaine from betaine aldehyde: step 1/1. In terms of biological role, involved in the biosynthesis of the osmoprotectant glycine betaine. Catalyzes the irreversible oxidation of betaine aldehyde to the corresponding acid. The protein is Betaine aldehyde dehydrogenase of Pectobacterium carotovorum subsp. carotovorum (strain PC1).